The chain runs to 214 residues: Probable nicotinate-nucleotide adenylyltransferase (214 aa).

Belongs to the NadD family.

The enzyme catalyses nicotinate beta-D-ribonucleotide + ATP + H(+) = deamido-NAD(+) + diphosphate. It participates in cofactor biosynthesis; NAD(+) biosynthesis; deamido-NAD(+) from nicotinate D-ribonucleotide: step 1/1. Catalyzes the reversible adenylation of nicotinate mononucleotide (NaMN) to nicotinic acid adenine dinucleotide (NaAD). This is Probable nicotinate-nucleotide adenylyltransferase from Aeromonas hydrophila subsp. hydrophila (strain ATCC 7966 / DSM 30187 / BCRC 13018 / CCUG 14551 / JCM 1027 / KCTC 2358 / NCIMB 9240 / NCTC 8049).